We begin with the raw amino-acid sequence, 134 residues long: uncharacterized protein (134 aa).

The interval 59–92 is disordered; that stretch reads VSKPKRRSPHPHGNKAADKRKTTEKEPERKKRVG. Positions 61–71 are enriched in basic residues; that stretch reads KPKRRSPHPHG. The segment covering 73–87 has biased composition (basic and acidic residues); the sequence is KAADKRKTTEKEPER.

This is an uncharacterized protein from Saccharomyces cerevisiae (strain ATCC 204508 / S288c) (Baker's yeast).